The chain runs to 64 residues: Conotoxin Cal6.24 (64 aa).

The signal sequence occupies residues 1–22; the sequence is MKLTCVMIVAVLVLTVCKVVTS. Cystine bridges form between cysteine 32–cysteine 50, cysteine 40–cysteine 54, and cysteine 49–cysteine 60.

In terms of tissue distribution, expressed by the venom duct.

It is found in the secreted. Functionally, probable neurotoxin. In Californiconus californicus (California cone), this protein is Conotoxin Cal6.24.